The primary structure comprises 197 residues: Holliday junction branch migration complex subunit RuvA (197 aa).

The tract at residues 1 to 64 (MYDYIKGIYK…DDSINLYGFF (64 aa)) is domain I. The segment at 65–143 (TEEERDMFNL…NDDIISDIDD (79 aa)) is domain II. The segment at 144-154 (LDSISNFQLHS) is flexible linker. Positions 154–197 (SAEALEALMSLGYSQKESEKALKNVDKENSLEDIIKACLKYLMG) are domain III.

It belongs to the RuvA family. In terms of assembly, homotetramer. Forms an RuvA(8)-RuvB(12)-Holliday junction (HJ) complex. HJ DNA is sandwiched between 2 RuvA tetramers; dsDNA enters through RuvA and exits via RuvB. An RuvB hexamer assembles on each DNA strand where it exits the tetramer. Each RuvB hexamer is contacted by two RuvA subunits (via domain III) on 2 adjacent RuvB subunits; this complex drives branch migration. In the full resolvosome a probable DNA-RuvA(4)-RuvB(12)-RuvC(2) complex forms which resolves the HJ.

It is found in the cytoplasm. Functionally, the RuvA-RuvB-RuvC complex processes Holliday junction (HJ) DNA during genetic recombination and DNA repair, while the RuvA-RuvB complex plays an important role in the rescue of blocked DNA replication forks via replication fork reversal (RFR). RuvA specifically binds to HJ cruciform DNA, conferring on it an open structure. The RuvB hexamer acts as an ATP-dependent pump, pulling dsDNA into and through the RuvAB complex. HJ branch migration allows RuvC to scan DNA until it finds its consensus sequence, where it cleaves and resolves the cruciform DNA. The polypeptide is Holliday junction branch migration complex subunit RuvA (Clostridium tetani (strain Massachusetts / E88)).